Here is a 1913-residue protein sequence, read N- to C-terminus: GREB1-like protein (1913 aa).

The span at methionine 86 to serine 96 shows a compositional bias: acidic residues. Disordered stretches follow at residues methionine 86–proline 111, asparagine 281–proline 309, glutamate 1097–isoleucine 1157, and aspartate 1179–serine 1207. Residues lysine 289 to glycine 301 are compositionally biased toward low complexity. Residues proline 1118–isoleucine 1157 are compositionally biased toward polar residues. A compositionally biased stretch (low complexity) spans serine 1187–serine 1200. A helical transmembrane segment spans residues glycine 1832 to leucine 1852.

Belongs to the GREB1 family. Expressed in the inner ear, with a high presence in the spiral ganglia, cochlear nerve bundles, and hair cells.

The protein resides in the membrane. In terms of biological role, plays a major role in early metanephros and genital development. The protein is GREB1-like protein (Greb1l) of Mus musculus (Mouse).